A 352-amino-acid chain; its full sequence is MATQEEKQKALDAALGQIEKQFGKGAIMKLGDSQKLDIEAISTGSFGLDLALGIGGLPMGRIVEIFGPESSGKTTLTLSVIAEAQKTGKTCAFIDAEHALDPIYASKLGVDVKEPLVSQPDNGEQALEICDALVRSGAVDVIIVDSVAALTPKAEIEGDMGDSHMGLQARLMSQALRKLTSQIKNANCLVIFINQIRMKIGVMFGNPETTTGGNALKFYASVRLDIRRVGSIKEGDEVIGNETRVKVVKNKVAPPFRQVDFQILYGEGISKESELIELGVKHKLISKAGAWYAYQNEKIGQGKTNAMKWLKDNPEQAKFIESTLRDELLAHPESAITAEVEDEAGNGEGDFE.

Residue 67–74 coordinates ATP; that stretch reads GPESSGKT.

This sequence belongs to the RecA family.

It is found in the cytoplasm. Can catalyze the hydrolysis of ATP in the presence of single-stranded DNA, the ATP-dependent uptake of single-stranded DNA by duplex DNA, and the ATP-dependent hybridization of homologous single-stranded DNAs. It interacts with LexA causing its activation and leading to its autocatalytic cleavage. The protein is Protein RecA of Aggregatibacter actinomycetemcomitans (Actinobacillus actinomycetemcomitans).